We begin with the raw amino-acid sequence, 399 residues long: V-set and immunoglobulin domain-containing protein 4 (399 aa).

The first 19 residues, 1-19 (MGILLGLLLLGHLTVDTYG), serve as a signal peptide directing secretion. At 20–283 (RPILEVPESV…TSAGPGKSLP (264 aa)) the chain is on the extracellular side. Ig-like domains follow at residues 21-131 (PILE…DKIT) and 143-226 (PTVT…SDIV). 2 cysteine pairs are disulfide-bonded: Cys41–Cys113 and Cys165–Cys211. Residues 284-304 (VFAIILIISLCCMVVFTMAYI) traverse the membrane as a helical segment. The Cytoplasmic portion of the chain corresponds to 305–399 (MLCRKTSQQE…FLATEGKSVC (95 aa)).

Abundantly expressed in several fetal tissues. In adult tissues, highest expression in lung and placenta. Expressed in resting macrophages.

It is found in the membrane. Its function is as follows. Phagocytic receptor, strong negative regulator of T-cell proliferation and IL2 production. Potent inhibitor of the alternative complement pathway convertases. The sequence is that of V-set and immunoglobulin domain-containing protein 4 (VSIG4) from Homo sapiens (Human).